Reading from the N-terminus, the 395-residue chain is Elongation factor Tu (395 aa).

In terms of domain architecture, tr-type G spans 10 to 205; sequence KVHMNVGTIG…TMDEYFKDPV (196 aa). Positions 19–26 are G1; it reads GHVDHGKT. A GTP-binding site is contributed by 19–26; the sequence is GHVDHGKT. Thr-26 provides a ligand contact to Mg(2+). The interval 60 to 64 is G2; sequence GITIN. Residues 81–84 form a G3 region; the sequence is DCPG. Residues 81 to 85 and 136 to 139 contribute to the GTP site; these read DCPGH and NKVD. Positions 136-139 are G4; it reads NKVD. The segment at 173-175 is G5; the sequence is SAF.

Belongs to the TRAFAC class translation factor GTPase superfamily. Classic translation factor GTPase family. EF-Tu/EF-1A subfamily. In terms of assembly, monomer.

The protein resides in the cytoplasm. It carries out the reaction GTP + H2O = GDP + phosphate + H(+). In terms of biological role, GTP hydrolase that promotes the GTP-dependent binding of aminoacyl-tRNA to the A-site of ribosomes during protein biosynthesis. This is Elongation factor Tu from Treponema denticola (strain ATCC 35405 / DSM 14222 / CIP 103919 / JCM 8153 / KCTC 15104).